Here is a 537-residue protein sequence, read N- to C-terminus: Glutamyl-tRNA(Gln) amidotransferase subunit B, chloroplastic/mitochondrial (537 aa).

This sequence belongs to the GatB/GatE family. GatB subfamily. Subunit of the heterotrimeric GatCAB amidotransferase (AdT) complex, composed of A, B and C subunits.

The protein resides in the mitochondrion. Its subcellular location is the plastid. It is found in the chloroplast. The enzyme catalyses L-glutamyl-tRNA(Gln) + L-glutamine + ATP + H2O = L-glutaminyl-tRNA(Gln) + L-glutamate + ADP + phosphate + H(+). Its function is as follows. Allows the formation of correctly charged Gln-tRNA(Gln) through the transamidation of misacylated Glu-tRNA(Gln) in chloroplasts and mitochondria. The reaction takes place in the presence of glutamine and ATP through an activated gamma-phospho-Glu-tRNA(Gln). In Ostreococcus tauri, this protein is Glutamyl-tRNA(Gln) amidotransferase subunit B, chloroplastic/mitochondrial.